A 338-amino-acid chain; its full sequence is Ribosomal RNA small subunit methyltransferase H (338 aa).

Residues 53 to 55 (GGH), Asp-72, Tyr-99, Asp-123, and Gln-130 contribute to the S-adenosyl-L-methionine site. The interval 277–298 (ITPRSKSKSPEGLPVELPGMGP) is disordered.

It belongs to the methyltransferase superfamily. RsmH family.

The protein resides in the cytoplasm. The enzyme catalyses cytidine(1402) in 16S rRNA + S-adenosyl-L-methionine = N(4)-methylcytidine(1402) in 16S rRNA + S-adenosyl-L-homocysteine + H(+). Functionally, specifically methylates the N4 position of cytidine in position 1402 (C1402) of 16S rRNA. The sequence is that of Ribosomal RNA small subunit methyltransferase H from Rhodococcus opacus (strain B4).